Here is a 636-residue protein sequence, read N- to C-terminus: Polyglycine hydrolase (636 aa).

A signal peptide spans 1–22 (MHSLSLRRLLTSVLSLCSCSSA). 2 N-linked (GlcNAc...) asparagine glycosylation sites follow: Asn30 and Asn151. Cys141 and Cys175 form a disulfide bridge. The active site involves Ser363. 2 N-linked (GlcNAc...) asparagine glycosylation sites follow: Asn383 and Asn481. Positions 512–540 (TEDRIVQESKNTGQDPVHPQSAKLVPGPH) are disordered.

This sequence belongs to the peptidase S12 family.

The protein localises to the secreted. It carries out the reaction a glycyl-glycyl-[protein] + H2O = N-terminal glycyl-[protein] + [protein]-C-terminal glycine. Its function is as follows. Serine-type endopeptidase that cleaves Gly-Gly bonds in the polyglycine linker of host plant class IV chitinases to disrupt their chitin-binding, and thereby plays a role in lowering the defense responses of the host to the fungus. Degrades Z.mays Endochitinase A (CHIA) in vitro, although corn is not its host species. The polypeptide is Polyglycine hydrolase (Fusarium vanettenii (strain ATCC MYA-4622 / CBS 123669 / FGSC 9596 / NRRL 45880 / 77-13-4) (Fusarium solani subsp. pisi)).